A 283-amino-acid polypeptide reads, in one-letter code: Gap junction beta-1 protein (283 aa).

The Cytoplasmic portion of the chain corresponds to 1 to 22 (MNWTGLYTLLSGVNRHSTAIGR). Residues 23–45 (VWLSVIFIFRIMVLVVAAESVWG) form a helical membrane-spanning segment. The Extracellular portion of the chain corresponds to 46-75 (DEKSSFICNTLQPGCNSVCYDQFFPISHVR). Residues 76 to 95 (LWSLQLILVSTPALLVAMHV) form a helical membrane-spanning segment. At 96 to 130 (AHQQHIEKKMLRLEGHGDPLHLEEVKRHKVHISGT) the chain is on the cytoplasmic side. The chain crosses the membrane as a helical span at residues 131 to 153 (LWWTYVISVVFRLLFEAVFMYVF). The Extracellular segment spans residues 154–191 (YLLYPGYAMVRLVKCDVYPCPNTVDCFVSRPTEKTVFT). The chain crosses the membrane as a helical span at residues 192–214 (VFMLAASGICIILNVAEVVYLII). The Cytoplasmic portion of the chain corresponds to 215 to 283 (RACARRAQRR…AEKSDRCSAC (69 aa)). Ser-233, Ser-258, Ser-266, and Ser-277 each carry phosphoserine.

Belongs to the connexin family. Beta-type (group I) subfamily. As to quaternary structure, a connexon is composed of a hexamer of connexins. Interacts with CNST.

Its subcellular location is the cell membrane. It is found in the cell junction. The protein localises to the gap junction. In terms of biological role, one gap junction consists of a cluster of closely packed pairs of transmembrane channels, the connexons, through which materials of low MW diffuse from one cell to a neighboring cell. This chain is Gap junction beta-1 protein (GJB1), found in Homo sapiens (Human).